A 358-amino-acid polypeptide reads, in one-letter code: Methylthioribose-1-phosphate isomerase (358 aa).

Substrate contacts are provided by residues Arg54–Ala56, Arg96, and Gln205. The active-site Proton donor is Asp246. Asn256 to Lys257 contributes to the substrate binding site.

This sequence belongs to the eIF-2B alpha/beta/delta subunits family. MtnA subfamily.

The enzyme catalyses 5-(methylsulfanyl)-alpha-D-ribose 1-phosphate = 5-(methylsulfanyl)-D-ribulose 1-phosphate. It participates in amino-acid biosynthesis; L-methionine biosynthesis via salvage pathway; L-methionine from S-methyl-5-thio-alpha-D-ribose 1-phosphate: step 1/6. Functionally, catalyzes the interconversion of methylthioribose-1-phosphate (MTR-1-P) into methylthioribulose-1-phosphate (MTRu-1-P). This Pseudomonas aeruginosa (strain UCBPP-PA14) protein is Methylthioribose-1-phosphate isomerase.